The primary structure comprises 273 residues: Large ribosomal subunit protein uL2 (273 aa).

Residues 228–273 (IDHPHGGGEGKTSGGRHPVTPWGFSTKGKKTRKNKRTSKFIVKKRK) are disordered. Residues 254-273 (KGKKTRKNKRTSKFIVKKRK) show a composition bias toward basic residues.

Belongs to the universal ribosomal protein uL2 family. As to quaternary structure, part of the 50S ribosomal subunit. Forms a bridge to the 30S subunit in the 70S ribosome.

Functionally, one of the primary rRNA binding proteins. Required for association of the 30S and 50S subunits to form the 70S ribosome, for tRNA binding and peptide bond formation. It has been suggested to have peptidyltransferase activity; this is somewhat controversial. Makes several contacts with the 16S rRNA in the 70S ribosome. The polypeptide is Large ribosomal subunit protein uL2 (Rickettsia typhi (strain ATCC VR-144 / Wilmington)).